The following is a 497-amino-acid chain: uncharacterized protein (497 aa).

Residue G266 to S273 coordinates ATP.

This sequence belongs to the AAA ATPase family. Highly divergent.

The protein resides in the plastid. It localises to the chloroplast. This is an uncharacterized protein from Trieres chinensis (Marine centric diatom).